The primary structure comprises 1296 residues: Histone-lysine N-methyltransferase EHMT1 (1296 aa).

Disordered regions lie at residues 1–111 and 170–200; these read MAAA…NHVT and PQTP…TDVR. Residue Ala2 is modified to N-acetylalanine. Over residues 14 to 31 the composition is skewed to basic and acidic residues; sequence QETKQDCCMKTELLREDT. Lys23 is covalently cross-linked (Glycyl lysine isopeptide (Lys-Gly) (interchain with G-Cter in SUMO1); alternate). Lys23 is covalently cross-linked (Glycyl lysine isopeptide (Lys-Gly) (interchain with G-Cter in SUMO2); alternate). Over residues 77-89 the composition is skewed to polar residues; the sequence is NTRASPQEGTNRV. Residues 97–106 are compositionally biased toward basic and acidic residues; it reads VSERDTEVGK. Glycyl lysine isopeptide (Lys-Gly) (interchain with G-Cter in SUMO2) cross-links involve residues Lys191, Lys229, Lys232, Lys315, and Lys325. Positions 341–470 are disordered; the sequence is SLEMDSEDED…SSPGSMEQAA (130 aa). A compositionally biased stretch (acidic residues) spans 342–360; the sequence is LEMDSEDEDSDELEDDEDH. The segment covering 371–391 has biased composition (basic and acidic residues); that stretch reads EDSRTSKESMSETDRAAKMDG. Residues 392–414 are compositionally biased toward acidic residues; sequence DSEEEQESPDTGEDEDGGDESDL. Residue Lys430 forms a Glycyl lysine isopeptide (Lys-Gly) (interchain with G-Cter in SUMO2) linkage. Phosphoserine is present on Ser433. Positions 438–450 are enriched in basic residues; the sequence is PARKRRRRSRKKP. Position 481 is a phosphoserine (Ser481). Glycyl lysine isopeptide (Lys-Gly) (interchain with G-Cter in SUMO2) cross-links involve residues Lys559, Lys644, Lys659, and Lys729. The segment at 653-714 is disordered; the sequence is LAPGQEKSLA…PTSGLSQGPG (62 aa). ANK repeat units follow at residues 735–764, 770–799, 803–832, 836–866, 870–899, 903–932, 936–965, and 969–1002; these read FHPK…DPNF, SKRS…NIDT, DQRT…QVDP, EGST…DVNC, GGWT…DINI, EENI…DLHA, HGDS…DVTL, and EGET…DKPV. The segment at 903 to 905 is histone H3K9me binding; sequence EEN. Residue Ser1046 is modified to Phosphoserine. The 64-residue stretch at 1058–1121 folds into the Pre-SET domain; sequence QYCVCVDDCS…NCRNRVVQNG (64 aa). Residues Cys1060, Cys1062, Cys1066, Cys1071, Cys1073, Cys1103, Cys1107, Cys1109, and Cys1113 each coordinate Zn(2+). The SET domain occupies 1124–1241; that stretch reads ARLQLYRTQD…AGEQLGFDYG (118 aa). S-adenosyl-L-methionine is bound by residues 1134 to 1136, Tyr1171, and 1198 to 1199; these read MGW and NH. Residues 1160–1179 are interaction with histone H3; it reads DSEADVREEDSYLFDLDNKD. Cys1201 contacts Zn(2+). Residues 1240-1243 form an interaction with histone H3 region; it reads YGER. Residue Cys1254 participates in Zn(2+) binding. Residue Arg1255 participates in S-adenosyl-L-methionine binding. The Zn(2+) site is built by Cys1256 and Cys1261. The interval 1271-1296 is disordered; that stretch reads RQASAAQEPQENGLPDTSSAAAADPL.

It belongs to the class V-like SAM-binding methyltransferase superfamily. In terms of assembly, interacts with WIZ. Part of the E2F6.com-1 complex in G0 phase composed of E2F6, MGA, MAX, TFDP1, CBX3, BAT8, EHMT1, RING1, RNF2, MBLR, L3MBTL2 and YAF2. Interacts with MPHOSPH8. Interacts with CDYL. Interacts with REST only in the presence of CDYL. Part of a complex containing at least CDYL, REST, WIZ, SETB1, EHMT1 and EHMT2. Heterodimer; heterodimerizes with EHMT2. Interacts (via ANK repeats) with RELA (when monomethylated at 'Lys-310'). Interacts with Baz2b. Ubiquitous.

Its subcellular location is the nucleus. It is found in the chromosome. It catalyses the reaction N(6)-methyl-L-lysyl(9)-[histone H3] + S-adenosyl-L-methionine = N(6),N(6)-dimethyl-L-lysyl(9)-[histone H3] + S-adenosyl-L-homocysteine + H(+). The catalysed reaction is L-lysyl(9)-[histone H3] + S-adenosyl-L-methionine = N(6)-methyl-L-lysyl(9)-[histone H3] + S-adenosyl-L-homocysteine + H(+). With respect to regulation, methyltransferase activity is inhibited by BIX-01294. Efficiently inhibited by compound E72, a BIX-01294 derivative in which the diazepane ring and the benzyl are replaced with a 3-dimethylaminopropyl and a 5-aminopentyl group at sites B and C, respectively. Functionally, histone methyltransferase that specifically mono- and dimethylates 'Lys-9' of histone H3 (H3K9me1 and H3K9me2, respectively) in euchromatin. H3K9me represents a specific tag for epigenetic transcriptional repression by recruiting HP1 proteins to methylated histones. Also weakly methylates 'Lys-27' of histone H3 (H3K27me). Also required for DNA methylation, the histone methyltransferase activity is not required for DNA methylation, suggesting that these 2 activities function independently. Probably targeted to histone H3 by different DNA-binding proteins like E2F6, MGA, MAX and/or DP1. During G0 phase, it probably contributes to silencing of MYC- and E2F-responsive genes, suggesting a role in G0/G1 transition in cell cycle. In addition to the histone methyltransferase activity, also methylates non-histone proteins: mediates dimethylation of 'Lys-373' of p53/TP53. Represses the expression of mitochondrial function-related genes, perhaps by occupying their promoter regions, working in concert with probable chromatin reader Baz2b. This chain is Histone-lysine N-methyltransferase EHMT1 (Ehmt1), found in Mus musculus (Mouse).